Here is a 660-residue protein sequence, read N- to C-terminus: MKAVIFAYHDMGCQGVQAVLDAGYEIAAIFTHADNPAENTFFGSVSRLAAELGIPVYAPDNVNHPIWVDRIAELAPDIIFSFYYRNLLSEEILHLAPAGAFNLHGSLLPAYRGRAPLNWVLVNGESETGVTLHRMVKRADAGEIVASQRVAIAQDDVALTLHHKLCQAARQLLNSILPTMKCGDIPSVPQRESDATYYGRRRPEDGLIDWHKPVSTVHNLVRAVAAPWPGAFSYNGSQKFTIWSSRICPDAQGALPGSVISVSPLRVACADGALEIITGQAGDGITVQGSQLAQTLGLVAGARLNRPPATSGKRRIRVLILGVNGFIGNHLTERLLNEENYEVYGMDIGSNAISRFLLHPRFHFVEGDISIHSEWIEYHVKKCDVVLPLVAIATPIEYTRNPLRVFELDFEENLRIIRYCVKYRKRVVFPSTSEVYGMCTDASFDEDKSNLIVGPVNKPRWIYSVSKQLLDRVIWAYGEKEGLRFTLFRPFNWMGPRLDSLNAARIGSSRAITQLILNLVEGTPIKLIDGGQQKRCFTDIRDGIEALFRIIVNDGDRCDGKIINIGNPDNEASIQELATLLLDSFDKHPLRCHFPPFAGFQVVESRSYYGKGYQDVAHRKPSIDNARRCLDWEPSIAMRDTVEETLDFFLRSVDIAERAS.

The tract at residues 1-304 is formyltransferase ArnAFT; it reads MKAVIFAYHD…TLGLVAGARL (304 aa). Residue His-104 is the Proton donor; for formyltransferase activity of the active site. (6R)-10-formyltetrahydrofolate contacts are provided by residues Arg-114 and 136-140; that span reads VKRAD. Residues 314 to 660 form a dehydrogenase ArnADH region; sequence RRIRVLILGV…RSVDIAERAS (347 aa). NAD(+) contacts are provided by residues Asp-347 and 368–369; that span reads DI. Residues Ala-393, Tyr-398, and 432–433 contribute to the UDP-alpha-D-glucuronate site; that span reads TS. Glu-434 (proton acceptor; for decarboxylase activity) is an active-site residue. Residues Arg-460, Asn-492, 526-535, and Tyr-613 each bind UDP-alpha-D-glucuronate; that span reads KLIDGGQQKR. Arg-619 (proton donor; for decarboxylase activity) is an active-site residue.

In the N-terminal section; belongs to the Fmt family. UDP-L-Ara4N formyltransferase subfamily. The protein in the C-terminal section; belongs to the NAD(P)-dependent epimerase/dehydratase family. UDP-glucuronic acid decarboxylase subfamily. As to quaternary structure, homohexamer, formed by a dimer of trimers.

The enzyme catalyses UDP-alpha-D-glucuronate + NAD(+) = UDP-beta-L-threo-pentopyranos-4-ulose + CO2 + NADH. It carries out the reaction UDP-4-amino-4-deoxy-beta-L-arabinose + (6R)-10-formyltetrahydrofolate = UDP-4-deoxy-4-formamido-beta-L-arabinose + (6S)-5,6,7,8-tetrahydrofolate + H(+). The protein operates within nucleotide-sugar biosynthesis; UDP-4-deoxy-4-formamido-beta-L-arabinose biosynthesis; UDP-4-deoxy-4-formamido-beta-L-arabinose from UDP-alpha-D-glucuronate: step 1/3. It functions in the pathway nucleotide-sugar biosynthesis; UDP-4-deoxy-4-formamido-beta-L-arabinose biosynthesis; UDP-4-deoxy-4-formamido-beta-L-arabinose from UDP-alpha-D-glucuronate: step 3/3. It participates in bacterial outer membrane biogenesis; lipopolysaccharide biosynthesis. In terms of biological role, bifunctional enzyme that catalyzes the oxidative decarboxylation of UDP-glucuronic acid (UDP-GlcUA) to UDP-4-keto-arabinose (UDP-Ara4O) and the addition of a formyl group to UDP-4-amino-4-deoxy-L-arabinose (UDP-L-Ara4N) to form UDP-L-4-formamido-arabinose (UDP-L-Ara4FN). The modified arabinose is attached to lipid A and is required for resistance to polymyxin and cationic antimicrobial peptides. This chain is Bifunctional polymyxin resistance protein ArnA, found in Salmonella schwarzengrund (strain CVM19633).